We begin with the raw amino-acid sequence, 363 residues long: Phosphoserine aminotransferase (363 aa).

Arginine 42 lines the L-glutamate pocket. Pyridoxal 5'-phosphate is bound by residues 76 to 77, tryptophan 102, threonine 156, aspartate 175, and glutamine 198; that span reads GR. Residue lysine 199 is modified to N6-(pyridoxal phosphate)lysine. 240 to 241 provides a ligand contact to pyridoxal 5'-phosphate; that stretch reads NT.

Belongs to the class-V pyridoxal-phosphate-dependent aminotransferase family. SerC subfamily. As to quaternary structure, homodimer. Pyridoxal 5'-phosphate serves as cofactor.

It localises to the cytoplasm. It carries out the reaction O-phospho-L-serine + 2-oxoglutarate = 3-phosphooxypyruvate + L-glutamate. The catalysed reaction is 4-(phosphooxy)-L-threonine + 2-oxoglutarate = (R)-3-hydroxy-2-oxo-4-phosphooxybutanoate + L-glutamate. Its pathway is amino-acid biosynthesis; L-serine biosynthesis; L-serine from 3-phospho-D-glycerate: step 2/3. It functions in the pathway cofactor biosynthesis; pyridoxine 5'-phosphate biosynthesis; pyridoxine 5'-phosphate from D-erythrose 4-phosphate: step 3/5. Catalyzes the reversible conversion of 3-phosphohydroxypyruvate to phosphoserine and of 3-hydroxy-2-oxo-4-phosphonooxybutanoate to phosphohydroxythreonine. The protein is Phosphoserine aminotransferase of Shewanella halifaxensis (strain HAW-EB4).